Consider the following 528-residue polypeptide: Na(+)/H(+) antiporter NhaB (528 aa).

11 helical membrane passes run 10–30 (IGNFLGNSPKWYKIAILSFLI), 63–83 (YPLQPGGLLAIEAVAIGMTSA), 96–116 (VLLLLVFMVAGIYFMKQLLLF), 131–165 (VSLMFCLTSAFLSAFLDALTVIAVIIAVAVGFYAI), 204–224 (LLMHAGVGTALGGVCTMVGEP), 240–260 (FVVRMSPVTVPVLIAGILTCL), 305–325 (VLVGVWLIAGLALHLASVGLV), 359–379 (LAVFFAVVAVIIDQHLFAPVI), 391–411 (LVIFYIANGLLSMVSDNVFVG), 449–469 (ATPNGQAAFLFLLTSALAPLI), and 476–496 (MVWMALPYTIVLSVVGVLAIE).

The protein belongs to the NhaB Na(+)/H(+) (TC 2.A.34) antiporter family.

It localises to the cell inner membrane. It catalyses the reaction 2 Na(+)(in) + 3 H(+)(out) = 2 Na(+)(out) + 3 H(+)(in). Na(+)/H(+) antiporter that extrudes sodium in exchange for external protons. In Shewanella sp. (strain W3-18-1), this protein is Na(+)/H(+) antiporter NhaB.